The sequence spans 55 residues: Probable Rubredoxin-2 (55 aa).

Positions Met-4–Ile-54 constitute a Rubredoxin-like domain. 4 residues coordinate Fe cation: Cys-9, Cys-11, Cys-41, and Cys-44.

This sequence belongs to the rubredoxin family. Fe(3+) is required as a cofactor.

In terms of biological role, rubredoxin is a small nonheme, iron protein lacking acid-labile sulfide. Its single Fe, chelated to 4 Cys, functions as an electron acceptor and may also stabilize the conformation of the molecule. The protein is Probable Rubredoxin-2 of Methanocaldococcus jannaschii (strain ATCC 43067 / DSM 2661 / JAL-1 / JCM 10045 / NBRC 100440) (Methanococcus jannaschii).